Consider the following 435-residue polypeptide: Glutamate-1-semialdehyde 2,1-aminomutase (435 aa).

Lys-266 bears the N6-(pyridoxal phosphate)lysine mark.

This sequence belongs to the class-III pyridoxal-phosphate-dependent aminotransferase family. HemL subfamily. Homodimer. Pyridoxal 5'-phosphate serves as cofactor.

Its subcellular location is the cytoplasm. It catalyses the reaction (S)-4-amino-5-oxopentanoate = 5-aminolevulinate. The protein operates within porphyrin-containing compound metabolism; protoporphyrin-IX biosynthesis; 5-aminolevulinate from L-glutamyl-tRNA(Glu): step 2/2. The polypeptide is Glutamate-1-semialdehyde 2,1-aminomutase (Coxiella burnetii (strain RSA 331 / Henzerling II)).